A 344-amino-acid polypeptide reads, in one-letter code: Putative F-box/kelch-repeat protein At1g19930 (344 aa).

One can recognise an F-box domain in the interval 8 to 54 (TELIFSLPNDLLVNILARVSRLDYPILSLVSKRFSSVLTLPELYQTR). Kelch repeat units lie at residues 122-168 (NIYN…LLDG), 170-195 (IYVTGGCRLTFHGCGDQTDNVVVDGK), 196-241 (LHSC…YYYY), and 243-276 (NENIKWYDTKVRSWRTLNGLKTLPRFARYANVRL).

This chain is Putative F-box/kelch-repeat protein At1g19930, found in Arabidopsis thaliana (Mouse-ear cress).